The primary structure comprises 68 residues: Acylphosphatase (68 aa).

Residues 3-68 (RIACTVHGRV…RCTAGLPSAP (66 aa)) enclose the Acylphosphatase-like domain. Active-site residues include Arg18 and Asn36.

This sequence belongs to the acylphosphatase family.

It carries out the reaction an acyl phosphate + H2O = a carboxylate + phosphate + H(+). The polypeptide is Acylphosphatase (acyP) (Oleidesulfovibrio alaskensis (strain ATCC BAA-1058 / DSM 17464 / G20) (Desulfovibrio alaskensis)).